A 542-amino-acid chain; its full sequence is Putative beta-glucosidase 23 (542 aa).

A signal peptide spans 1-29 (MAACTSSLVSLLLLLLLLLLLLVAGEATA). The N-linked (GlcNAc...) asparagine glycan is linked to Asn-34. Residue Gln-88 coordinates a beta-D-glucoside. Residue Asn-135 is glycosylated (N-linked (GlcNAc...) asparagine). An a beta-D-glucoside-binding site is contributed by His-216. Catalysis depends on Glu-262, which acts as the Proton donor. Cys-281 and Cys-289 form a disulfide bridge. Tyr-405 is an a beta-D-glucoside binding site. Asn-445 is a glycosylation site (N-linked (GlcNAc...) asparagine). Residues Trp-476 and Phe-492 each contribute to the a beta-D-glucoside site.

Belongs to the glycosyl hydrolase 1 family.

The catalysed reaction is Hydrolysis of terminal, non-reducing beta-D-glucosyl residues with release of beta-D-glucose.. The chain is Putative beta-glucosidase 23 (BGLU23) from Oryza sativa subsp. japonica (Rice).